The primary structure comprises 195 residues: Molybdenum cofactor guanylyltransferase (195 aa).

GTP contacts are provided by residues 10 to 12 (LAG), Lys-23, Asn-51, Asp-69, and Asp-99. Asp-99 provides a ligand contact to Mg(2+).

Belongs to the MobA family. As to quaternary structure, monomer. Mg(2+) is required as a cofactor.

Its subcellular location is the cytoplasm. The enzyme catalyses Mo-molybdopterin + GTP + H(+) = Mo-molybdopterin guanine dinucleotide + diphosphate. Its function is as follows. Transfers a GMP moiety from GTP to Mo-molybdopterin (Mo-MPT) cofactor (Moco or molybdenum cofactor) to form Mo-molybdopterin guanine dinucleotide (Mo-MGD) cofactor. The polypeptide is Molybdenum cofactor guanylyltransferase (Yersinia pseudotuberculosis serotype O:1b (strain IP 31758)).